A 342-amino-acid chain; its full sequence is Porphobilinogen deaminase (342 aa).

The residue at position 249 (C249) is an S-(dipyrrolylmethanemethyl)cysteine. Positions A323–E342 are disordered.

The protein belongs to the HMBS family. Monomer. It depends on dipyrromethane as a cofactor.

It catalyses the reaction 4 porphobilinogen + H2O = hydroxymethylbilane + 4 NH4(+). It participates in porphyrin-containing compound metabolism; protoporphyrin-IX biosynthesis; coproporphyrinogen-III from 5-aminolevulinate: step 2/4. Functionally, tetrapolymerization of the monopyrrole PBG into the hydroxymethylbilane pre-uroporphyrinogen in several discrete steps. The sequence is that of Porphobilinogen deaminase from Paraburkholderia phytofirmans (strain DSM 17436 / LMG 22146 / PsJN) (Burkholderia phytofirmans).